Reading from the N-terminus, the 89-residue chain is Small ribosomal subunit protein uS14 (89 aa).

Belongs to the universal ribosomal protein uS14 family. Part of the 30S ribosomal subunit. Contacts proteins S3 and S10.

Functionally, binds 16S rRNA, required for the assembly of 30S particles and may also be responsible for determining the conformation of the 16S rRNA at the A site. This Shouchella clausii (strain KSM-K16) (Alkalihalobacillus clausii) protein is Small ribosomal subunit protein uS14.